Reading from the N-terminus, the 231-residue chain is High-affinity zinc uptake system ATP-binding protein ZnuC (231 aa).

Residues 4 to 230 (VSLKDIVFGY…CLTWNSCDEL (227 aa)) enclose the ABC transporter domain.

Belongs to the ABC transporter superfamily. In terms of assembly, the complex is composed of two ATP-binding proteins (ZnuC), two transmembrane proteins (ZnuB) and a solute-binding protein (ZnuA).

It is found in the cell membrane. The catalysed reaction is Zn(2+)(out) + ATP(in) + H2O(in) = Zn(2+)(in) + ADP(in) + phosphate(in) + H(+)(in). Functionally, part of the high-affinity ABC transporter complex ZnuABC involved in zinc import. Responsible for energy coupling to the transport system. ZnuABC-mediated zinc transport is required for comF expression and competence development. This Bacillus subtilis (strain 168) protein is High-affinity zinc uptake system ATP-binding protein ZnuC (znuC).